A 331-amino-acid polypeptide reads, in one-letter code: F-box protein At2g26160 (331 aa).

The F-box domain occupies 4–52 (PEWSELPGDLINLTANRFSSISDVLRVRSICKPWRSAAATPKSFQCNLP).

This chain is F-box protein At2g26160, found in Arabidopsis thaliana (Mouse-ear cress).